We begin with the raw amino-acid sequence, 488 residues long: Diacylglycerol O-acyltransferase 1 (488 aa).

The segment at 1 to 57 (MGDRGSSRRRRTGSRPSSHGGGGPAAAEEEVRDAAAGPDVGAAGDAPAPAPNKDGDA) is disordered. Topologically, residues 1-83 (MGDRGSSRRR…SLFSSDSGFS (83 aa)) are cytoplasmic. An involved in homomerization region spans residues 1–91 (MGDRGSSRRR…FSNYRGILNW (91 aa)). Phosphoserine is present on residues S17 and S18. Low complexity predominate over residues 34–47 (AAAGPDVGAAGDAP). The chain crosses the membrane as a helical span at residues 84 to 118 (NYRGILNWCVVMLILSNARLFLENLIKYGILVDPI). The Lumenal portion of the chain corresponds to 119 to 130 (QVVSLFLKDPYS). An extracellular loop 1 (EL1) region spans residues 119–130 (QVVSLFLKDPYS). The chain crosses the membrane as a helical span at residues 131–156 (WPAPCLVIAANVFAVAAFQVEKRLAV). Positions 131–488 (WPAPCLVIAA…LNYEAPAAEA (358 aa)) are MBOAT fold. The Cytoplasmic portion of the chain corresponds to 157-161 (GALTE). A helical transmembrane segment spans residues 162-184 (QAGLLLHVANLATILCFPAAVVL). The Lumenal segment spans residues 185 to 191 (LVESITP). Residues 192–223 (VGSLLALMAHTILFLKLFSYRDVNSWCRRARA) form a helical membrane-spanning segment. The Cytoplasmic segment spans residues 224-273 (KAASAGKKASSAAAPHTVSYPDNLTYRDLYYFLFAPTLCYELNFPRSPRI). Residues 224–276 (KAASAGKKASSAAAPHTVSYPDNLTYRDLYYFLFAPTLCYELNFPRSPRIRKR) form an intracellular loop 1 (IL1) region. The helical transmembrane segment at 274–308 (RKRFLLRRILEMLFFTQLQVGLIQQWMVPTIQNSM) threads the bilayer. The Lumenal portion of the chain corresponds to 309–315 (KPFKDMD). The chain crosses the membrane as a helical span at residues 316 to 353 (YSRIIERLLKLAVPNHLIWLIFFYWLFHSCLNAVAELM). Over 354 to 399 (QFGDREFYRDWWNSESVTYFWQNWNIPVHKWCIRHFYKPMLRRGSS) the chain is Cytoplasmic. Residues 354-399 (QFGDREFYRDWWNSESVTYFWQNWNIPVHKWCIRHFYKPMLRRGSS) are intracellular loop 2 (IL2). The FYXDWWN motif motif lies at 360–366 (FYRDWWN). Residues 374-382 (WQNWNIPVH), Y390, and R404 contribute to the an acyl-CoA site. The segment at 380–394 (PVHKWCIRHFYKPML) is amphipathic helix (AH). The helical transmembrane segment at 400–420 (KWMARTGVFLASAFFHEYLVS) threads the bilayer. The active site involves H415. The Lumenal portion of the chain corresponds to 421–428 (VPLRMFRL). Residues 429-447 (WAFTGMMAQIPLAWFVGRF) form a helical membrane-spanning segment. The Cytoplasmic portion of the chain corresponds to 448-449 (FQ). The helical transmembrane segment at 450–481 (GNYGNAAVWLSLIIGQPIAVLMYVHDYYVLNY) threads the bilayer. An acyl-CoA is bound at residue Y477. The Lumenal segment spans residues 482-488 (EAPAAEA).

This sequence belongs to the membrane-bound acyltransferase family. Sterol o-acyltransferase subfamily. As to quaternary structure, homodimer or homotetramer; both forms have similar enzymatic activities.

Its subcellular location is the endoplasmic reticulum membrane. The catalysed reaction is an acyl-CoA + a 1,2-diacyl-sn-glycerol = a triacyl-sn-glycerol + CoA. It catalyses the reaction all-trans-retinol + an acyl-CoA = an all-trans-retinyl ester + CoA. It carries out the reaction 2-(9Z-octadecenoyl)-glycerol + (9Z)-octadecenoyl-CoA = 1,2-di-(9Z-octadecenoyl)-sn-glycerol + CoA. The enzyme catalyses 1,2-di-(9Z-octadecenoyl)-sn-glycerol + (9Z)-octadecenoyl-CoA = 1,2,3-tri-(9Z-octadecenoyl)-glycerol + CoA. The catalysed reaction is all-trans-retinol + hexadecanoyl-CoA = all-trans-retinyl hexadecanoate + CoA. It catalyses the reaction 1-O-(9Z-octadecenyl)-glycerol + (9Z)-octadecenoyl-CoA = 1-O-(9Z-octadecyl)-3-(9Z-octadecenoyl)-glycerol + CoA. It carries out the reaction 1-O-(9Z-octadecyl)-3-(9Z-octadecenoyl)-glycerol + (9Z)-octadecenoyl-CoA = 1-O-(9Z-octadecenyl)-2,3-di-(9Z-octadecenoyl)glycerol + CoA. The enzyme catalyses 1-(9Z-octadecenoyl)-glycerol + (9Z)-octadecenoyl-CoA = 1,2-di-(9Z-octadecenoyl)-glycerol + CoA. The catalysed reaction is 1,2-di-(9Z-octadecenoyl)-glycerol + (9Z)-octadecenoate + H(+) = 1,2,3-tri-(9Z-octadecenoyl)-glycerol + H2O. It catalyses the reaction 1-octadecanoyl-2-(5Z,8Z,11Z,14Z-eicosatetraenoyl)-sn-glycerol + (9Z)-octadecenoyl-CoA = 1-octadecanoyl-2-(5Z,8Z,11Z,14Z)-eicosatetraenoyl-3-(9Z)-octadecenoyl-sn-glycerol + CoA. It carries out the reaction hexadecane-1,2-diol + 2 hexadecanoyl-CoA = 1,2-O,O-dihexadecanoyl-1,2-hexadecanediol + 2 CoA. The enzyme catalyses hexadecane-1,2-diol + hexadecanoyl-CoA = 2-hydroxyhexadecyl hexadecanoate + CoA. The catalysed reaction is 2-(9Z-octadecenoyl)-glycerol + hexadecanoyl-CoA = 1-hexadecanoyl-2-(9Z-octadecenoyl)-sn-glycerol + CoA. It catalyses the reaction 1,2-di-(9Z-octadecenoyl)-sn-glycerol + hexadecanoyl-CoA = 1,2-di-(9Z)-octadecenoyl-3-hexadecanoyl-sn-glycerol + CoA. It carries out the reaction hexadecan-1-ol + hexadecanoyl-CoA = hexadecanyl hexadecanoate + CoA. The enzyme catalyses 13-cis-retinol + hexadecanoyl-CoA = 13-cis-retinyl hexadecanoate + CoA. The catalysed reaction is 1,3-di-(9Z-octadecenoyl)-glycerol + (9Z)-octadecenoyl-CoA = 1,2,3-tri-(9Z-octadecenoyl)-glycerol + CoA. It catalyses the reaction 2,3-di-(9Z)-octadecenoyl-sn-glycerol + (9Z)-octadecenoyl-CoA = 1,2,3-tri-(9Z-octadecenoyl)-glycerol + CoA. Its pathway is lipid metabolism; glycerolipid metabolism. With respect to regulation, XP620 is a selective DGAT1 inhibitor. Functionally, catalyzes the terminal and only committed step in triacylglycerol synthesis by using diacylglycerol and fatty acyl CoA as substrates. Highly expressed in epithelial cells of the small intestine and its activity is essential for the absorption of dietary fats. In liver, plays a role in esterifying exogenous fatty acids to glycerol, and is required to synthesize fat for storage. Also present in female mammary glands, where it produces fat in the milk. May be involved in VLDL (very low density lipoprotein) assembly. In contrast to DGAT2 it is not essential for survival. Functions as the major acyl-CoA retinol acyltransferase (ARAT) in the skin, where it acts to maintain retinoid homeostasis and prevent retinoid toxicity leading to skin and hair disorders. Exhibits additional acyltransferase activities, includin acyl CoA:monoacylglycerol acyltransferase (MGAT), wax monoester and wax diester synthases. Also able to use 1-monoalkylglycerol (1-MAkG) as an acyl acceptor for the synthesis of monoalkyl-monoacylglycerol (MAMAG). The chain is Diacylglycerol O-acyltransferase 1 from Homo sapiens (Human).